The following is a 551-amino-acid chain: Glucose-6-phosphate isomerase (551 aa).

Residues 161–162 (GS), 212–217 (SKTFTT), Q356, E360, H391, and K516 each bind D-glucose 6-phosphate. E360 serves as the catalytic Proton donor. Active-site residues include H391 and K516.

This sequence belongs to the GPI family. As to quaternary structure, homodimer.

It is found in the cytoplasm. Its subcellular location is the cytosol. The enzyme catalyses alpha-D-glucose 6-phosphate = beta-D-fructose 6-phosphate. It functions in the pathway carbohydrate degradation; glycolysis; D-glyceraldehyde 3-phosphate and glycerone phosphate from D-glucose: step 2/4. In terms of biological role, in the cytoplasm, catalyzes the conversion of glucose-6-phosphate to fructose-6-phosphate, the second step in glycolysis, and the reverse reaction during gluconeogenesis. The polypeptide is Glucose-6-phosphate isomerase (gpi1) (Agaricus bisporus (White button mushroom)).